A 153-amino-acid polypeptide reads, in one-letter code: Putative nuclear shuttle protein (153 aa).

The protein belongs to the nanoviridae nuclear shuttle protein family.

The protein resides in the host nucleus. It localises to the host cytoplasm. Putative nuclear shuttle protein. The polypeptide is Putative nuclear shuttle protein (DNA-N) (Faba bean necrotic yellows virus (isolate Syrian SV292-88) (FBNYV)).